Reading from the N-terminus, the 364-residue chain is Phosphoserine aminotransferase (364 aa).

Arg-46 contributes to the L-glutamate binding site. Pyridoxal 5'-phosphate contacts are provided by residues 80-81 (AR), Trp-106, Thr-157, Asp-176, and Gln-199. At Lys-200 the chain carries N6-(pyridoxal phosphate)lysine. 241 to 242 (NT) serves as a coordination point for pyridoxal 5'-phosphate.

It belongs to the class-V pyridoxal-phosphate-dependent aminotransferase family. SerC subfamily. As to quaternary structure, homodimer. Pyridoxal 5'-phosphate serves as cofactor.

The protein localises to the cytoplasm. It catalyses the reaction O-phospho-L-serine + 2-oxoglutarate = 3-phosphooxypyruvate + L-glutamate. The enzyme catalyses 4-(phosphooxy)-L-threonine + 2-oxoglutarate = (R)-3-hydroxy-2-oxo-4-phosphooxybutanoate + L-glutamate. It functions in the pathway amino-acid biosynthesis; L-serine biosynthesis; L-serine from 3-phospho-D-glycerate: step 2/3. Its pathway is cofactor biosynthesis; pyridoxine 5'-phosphate biosynthesis; pyridoxine 5'-phosphate from D-erythrose 4-phosphate: step 3/5. Catalyzes the reversible conversion of 3-phosphohydroxypyruvate to phosphoserine and of 3-hydroxy-2-oxo-4-phosphonooxybutanoate to phosphohydroxythreonine. The polypeptide is Phosphoserine aminotransferase (Vibrio vulnificus (strain CMCP6)).